A 75-amino-acid chain; its full sequence is MVIAMKKLDVTGDICPVPVLKTKKALEELNEGEELEVVGDYKPALENIKRFAENNGYTVVLAEETESRFRIVIKK.

Cysteine 15 serves as the catalytic Cysteine persulfide intermediate.

This sequence belongs to the sulfur carrier protein TusA family.

The polypeptide is Putative sulfur carrier protein MJ0990 (Methanocaldococcus jannaschii (strain ATCC 43067 / DSM 2661 / JAL-1 / JCM 10045 / NBRC 100440) (Methanococcus jannaschii)).